A 479-amino-acid polypeptide reads, in one-letter code: Cruciferin PGCRURSE5 (479 aa).

Positions 1–23 are cleaved as a signal peptide; it reads MVKLAHLLVATFGVLLVLNGCLA. 2 cysteine pairs are disulfide-bonded: cysteine 37-cysteine 70 and cysteine 113-cysteine 296. The region spanning 42–241 is the Cupin type-1 1 domain; that stretch reads LDVLQPTETI…ALKMQLRLAQ (200 aa). Threonine 116 carries the phosphothreonine modification. Disordered stretches follow at residues 117–144, 196–219, and 271–291; these read FMDS…GFRD, RTFR…QQQN, and YESE…DNGL. Positions 124–141 are enriched in low complexity; that stretch reads QGQGQQGQQGQQGQQQQG. Residues 302–451 enclose the Cupin type-1 2 domain; sequence ENIDDPARAD…AFQISLEEAR (150 aa). Threonine 415 and threonine 440 each carry phosphothreonine.

The protein belongs to the 11S seed storage protein (globulins) family. In terms of assembly, hexamer; each subunit is composed of an acidic and a basic chain derived from a single precursor and linked by a disulfide bond.

Functionally, this is a seed storage protein. This is Cruciferin PGCRURSE5 (CRURS) from Raphanus sativus (Radish).